The primary structure comprises 444 residues: ATP-dependent protease ATPase subunit HslU (444 aa).

Residues isoleucine 18 and 60–65 contribute to the ATP site; that span reads GVGKTE. The tract at residues 141 to 161 is disordered; the sequence is DAWGNNEEGNNDSGTRQSFRK. The segment covering 147 to 157 has biased composition (polar residues); that stretch reads EEGNNDSGTRQ. Residues aspartate 257, glutamate 322, and arginine 394 each contribute to the ATP site.

This sequence belongs to the ClpX chaperone family. HslU subfamily. A double ring-shaped homohexamer of HslV is capped on each side by a ring-shaped HslU homohexamer. The assembly of the HslU/HslV complex is dependent on binding of ATP.

The protein localises to the cytoplasm. Functionally, ATPase subunit of a proteasome-like degradation complex; this subunit has chaperone activity. The binding of ATP and its subsequent hydrolysis by HslU are essential for unfolding of protein substrates subsequently hydrolyzed by HslV. HslU recognizes the N-terminal part of its protein substrates and unfolds these before they are guided to HslV for hydrolysis. In Aliivibrio fischeri (strain ATCC 700601 / ES114) (Vibrio fischeri), this protein is ATP-dependent protease ATPase subunit HslU.